An 839-amino-acid chain; its full sequence is Taste receptor type 1 member 2 (839 aa).

An N-terminal signal peptide occupies residues 1 to 19 (MGPRAKTICSLFFLLWVLA). The Extracellular portion of the chain corresponds to 20-566 (EPAENSDFYL…VFLEWHEAPT (547 aa)). 9 N-linked (GlcNAc...) asparagine glycosylation sites follow: asparagine 84, asparagine 248, asparagine 292, asparagine 312, asparagine 368, asparagine 407, asparagine 428, asparagine 487, and asparagine 527. A helical transmembrane segment spans residues 567–587 (IAVALLAALGFLSTLAILVIF). The Cytoplasmic segment spans residues 588–602 (WRHFQTPIVRSAGGP). Residues 603 to 623 (MCFLMLTLLLVAYMVVPVYVG) form a helical membrane-spanning segment. The Extracellular portion of the chain corresponds to 624–635 (PPKVSTCLCRQA). A helical transmembrane segment spans residues 636-656 (LFPLCFTICISCIAVRSFQIV). Residues 657 to 681 (CAFKMASRFPRAYSYWVRYQGPYVS) are Cytoplasmic-facing. A helical membrane pass occupies residues 682-702 (MAFITVLKMVIVVIGMLATGL). The Extracellular portion of the chain corresponds to 703 to 727 (SPTTRTDPDDPKITIVSCNPNYRNS). A helical transmembrane segment spans residues 728–748 (LLFNTSLDLLLSVVGFSFAYM). The Cytoplasmic portion of the chain corresponds to 749-760 (GKELPTNYNEAK). A helical membrane pass occupies residues 761–781 (FITLSMTFYFTSSVSLCTFMS). Residues 782–784 (AYS) lie on the Extracellular side of the membrane. A helical transmembrane segment spans residues 785-805 (GVLVTIVDLLVTVLNLLAISL). Topologically, residues 806–839 (GYFGPKCYMILFYPERNTSAYFNSMIQGYTMRRD) are cytoplasmic.

Belongs to the G-protein coupled receptor 3 family. TAS1R subfamily. Forms heterodimers with TAS1R3.

The protein resides in the cell membrane. Functionally, putative taste receptor. TAS1R2/TAS1R3 recognizes diverse natural and synthetic sweeteners. In Pan troglodytes (Chimpanzee), this protein is Taste receptor type 1 member 2 (TAS1R2).